Here is a 556-residue protein sequence, read N- to C-terminus: Innexin-7 (556 aa).

3 helical membrane passes run 21 to 41, 127 to 147, and 213 to 233; these read LVASIHSFLTSNLLVGLAVLI, FFLLFEAACFRLPCFIWKYFA, and AYYVTFIYFVAKVAFLLNVIL. N-linked (GlcNAc...) asparagine glycosylation is present at Asn-267. Residues 310-330 form a helical membrane-spanning segment; sequence IFVFLWAWYILLTAFTVGNLF. The disordered stretch occupies residues 431–556; that stretch reads DESQVESGKN…IPKTAEKKHW (126 aa). Over residues 435–447 the composition is skewed to polar residues; sequence VESGKNTAPSTSH. The segment covering 452 to 461 has biased composition (basic and acidic residues); it reads RGTEQLEKNV. Over residues 463–474 the composition is skewed to polar residues; the sequence is SRQGSLSTQLRP. Over residues 500–513 the composition is skewed to basic residues; sequence KGSKKPSPTKKKAS. The span at 514 to 527 shows a compositional bias: low complexity; the sequence is SKNSPQSSSNSRRP. The segment covering 539–556 has biased composition (basic and acidic residues); that stretch reads HHHEPDSKIPKTAEKKHW.

It belongs to the pannexin family.

Its subcellular location is the cell membrane. It is found in the cell junction. The protein resides in the gap junction. Structural component of the gap junctions. The polypeptide is Innexin-7 (inx-7) (Caenorhabditis elegans).